A 518-amino-acid polypeptide reads, in one-letter code: Cytochrome P450 CYP72A219 (518 aa).

A helical membrane pass occupies residues 2–22 (ELVLKLISSFCAIVVVILLGW). C465 is a binding site for heme.

The protein belongs to the cytochrome P450 family. Heme is required as a cofactor.

The protein localises to the membrane. Probable heme-thiolate monooxygenase. The chain is Cytochrome P450 CYP72A219 from Panax ginseng (Korean ginseng).